The chain runs to 553 residues: Putative polyamine transporter (553 aa).

The next 11 helical transmembrane spans lie at W43–F63, L68–A88, I133–F153, A163–P183, F190–L210, W240–Y260, A280–A300, V333–L353, L397–A417, I453–V473, and W485–A505.

It belongs to the amino acid-polyamine-organocation (APC) superfamily.

The protein resides in the membrane. This is Putative polyamine transporter (GPT1) from Candida albicans (Yeast).